The sequence spans 467 residues: UDP-N-acetylmuramate--L-alanine ligase (467 aa).

ATP is bound at residue 114–120 (GTHGKTT).

This sequence belongs to the MurCDEF family.

The protein localises to the cytoplasm. It catalyses the reaction UDP-N-acetyl-alpha-D-muramate + L-alanine + ATP = UDP-N-acetyl-alpha-D-muramoyl-L-alanine + ADP + phosphate + H(+). Its pathway is cell wall biogenesis; peptidoglycan biosynthesis. Its function is as follows. Cell wall formation. This is UDP-N-acetylmuramate--L-alanine ligase from Azorhizobium caulinodans (strain ATCC 43989 / DSM 5975 / JCM 20966 / LMG 6465 / NBRC 14845 / NCIMB 13405 / ORS 571).